A 191-amino-acid polypeptide reads, in one-letter code: dCTP deaminase, dUMP-forming (191 aa).

DCTP contacts are provided by residues 101–106 (KSSLGR), Asp119, 127–129 (TLE), Gln148, Tyr162, and Gln174. Glu129 acts as the Proton donor/acceptor in catalysis. The segment at 169–191 (NRYQGQRGPTASRSHLNFHRTRI) is disordered. Positions 171-183 (YQGQRGPTASRSH) are enriched in polar residues.

The protein belongs to the dCTP deaminase family. Homotrimer.

The enzyme catalyses dCTP + 2 H2O = dUMP + NH4(+) + diphosphate. Its pathway is pyrimidine metabolism; dUMP biosynthesis; dUMP from dCTP: step 1/1. Bifunctional enzyme that catalyzes both the deamination of dCTP to dUTP and the hydrolysis of dUTP to dUMP without releasing the toxic dUTP intermediate. This Pseudarthrobacter chlorophenolicus (strain ATCC 700700 / DSM 12829 / CIP 107037 / JCM 12360 / KCTC 9906 / NCIMB 13794 / A6) (Arthrobacter chlorophenolicus) protein is dCTP deaminase, dUMP-forming.